Here is a 504-residue protein sequence, read N- to C-terminus: Nuclear hormone receptor family member nhr-80 (504 aa).

The segment at residues 27–103 (STRCLICSAQ…NGMKPGGVQP (77 aa)) is a DNA-binding region (nuclear receptor). 2 consecutive NR C4-type zinc fingers follow at residues 30 to 50 (CLIC…CSAC) and 66 to 86 (CITG…CRSC). Residues 177–192 (SSSTSFSASTTTNYST) are compositionally biased toward low complexity. Residues 177–199 (SSSTSFSASTTTNYSTPGPSPMA) form a disordered region. The region spanning 214 to 466 (EEMKLGERRR…KLVLQLLNLD (253 aa)) is the NR LBD domain. The interval 455 to 466 (LDKLVLQLLNLD) is AF-2.

This sequence belongs to the nuclear hormone receptor family. Interacts with nuclear hormone receptor nhr-49; the interaction is direct. In terms of tissue distribution, expressed in the intestine and in some head and tail neurons, as well as the ventral nerve cord.

Its subcellular location is the nucleus. Transcription factor. Binds to regulatory elements and regulates transcription of target genes, including acyltransferase dgat-2. As part of a lysosome-to-nucleus retrograde lipid signaling pathway, acts as a direct nuclear receptor of oleoylethanolamide (OEA) and, acting in concert with nuclear hormone receptor nhr-49, activates the transcription of genes promoting longevity and mitochondrial beta-oxidation. Required to modulate expression of delta-9 fatty acid desaturases, thereby regulating lipid metabolism; in some contexts, acting in concert with nhr-49. Involved in modulation of lipid metabolism in response to the citrate-induced mitochondrial unfolded protein response (mtUPR), acting downstream of transcription factor dve-1 and ubiquitin-like protein 5. Plays a role in modulating mitochondrial morphology and function. Involved in positively modulating life-span in a germline-dependent manner, acting in concert with nuclear hormone receptor daf-12. Plays a role in transgenerational lipid accumulation in response to a high-fat diet. This is Nuclear hormone receptor family member nhr-80 from Caenorhabditis elegans.